We begin with the raw amino-acid sequence, 31 residues long: Cytochrome b6-f complex subunit 6 (31 aa).

The chain crosses the membrane as a helical span at residues 4-24 (LTSYFGFLLAALTITPALFIG).

Belongs to the PetL family. In terms of assembly, the 4 large subunits of the cytochrome b6-f complex are cytochrome b6, subunit IV (17 kDa polypeptide, PetD), cytochrome f and the Rieske protein, while the 4 small subunits are PetG, PetL, PetM and PetN. The complex functions as a dimer.

Its subcellular location is the plastid. The protein localises to the chloroplast thylakoid membrane. Its function is as follows. Component of the cytochrome b6-f complex, which mediates electron transfer between photosystem II (PSII) and photosystem I (PSI), cyclic electron flow around PSI, and state transitions. PetL is important for photoautotrophic growth as well as for electron transfer efficiency and stability of the cytochrome b6-f complex. The chain is Cytochrome b6-f complex subunit 6 from Agrostis stolonifera (Creeping bentgrass).